A 407-amino-acid chain; its full sequence is Arginine biosynthesis bifunctional protein ArgJ (407 aa).

Substrate-binding residues include Thr-154, Lys-180, Thr-191, Glu-278, Asn-402, and Ser-407. The active-site Nucleophile is the Thr-191.

It belongs to the ArgJ family. As to quaternary structure, heterotetramer of two alpha and two beta chains.

The protein resides in the cytoplasm. The enzyme catalyses N(2)-acetyl-L-ornithine + L-glutamate = N-acetyl-L-glutamate + L-ornithine. It catalyses the reaction L-glutamate + acetyl-CoA = N-acetyl-L-glutamate + CoA + H(+). The protein operates within amino-acid biosynthesis; L-arginine biosynthesis; L-ornithine and N-acetyl-L-glutamate from L-glutamate and N(2)-acetyl-L-ornithine (cyclic): step 1/1. It participates in amino-acid biosynthesis; L-arginine biosynthesis; N(2)-acetyl-L-ornithine from L-glutamate: step 1/4. Functionally, catalyzes two activities which are involved in the cyclic version of arginine biosynthesis: the synthesis of N-acetylglutamate from glutamate and acetyl-CoA as the acetyl donor, and of ornithine by transacetylation between N(2)-acetylornithine and glutamate. The protein is Arginine biosynthesis bifunctional protein ArgJ of Psychrobacter arcticus (strain DSM 17307 / VKM B-2377 / 273-4).